We begin with the raw amino-acid sequence, 108 residues long: Ig kappa chain V region GOM (108 aa).

A framework-1 region spans residues Asp-1–Cys-23. The cysteines at positions 23 and 88 are disulfide-linked. The interval Arg-24–Asn-34 is complementarity-determining-1. Residues Trp-35–Glu-49 form a framework-2 region. The disordered stretch occupies residues Pro-44–Gly-66. The tract at residues Gln-50–Ser-56 is complementarity-determining-2. A framework-3 region spans residues Gly-57–Cys-88. Residues Met-89 to Thr-97 form a complementarity-determining-3 region. The tract at residues Phe-98–Arg-107 is framework-4.

The sequence is that of Ig kappa chain V region GOM from Canis lupus familiaris (Dog).